We begin with the raw amino-acid sequence, 2230 residues long: DNA polymerase epsilon catalytic subunit A (2230 aa).

A compositionally biased stretch (polar residues) spans 1–19 (MPTRQPSKYGNKFRSSSAS). The disordered stretch occupies residues 1–24 (MPTRQPSKYGNKFRSSSASFKPKR). The Zn(2+) site is built by C2101, C2104, C2136, and C2139. A CysA-type zinc finger spans residues 2101–2139 (CNACCLIRDLDLCRDEDVLPEMGSDPNKAAPKPWRCPFC). [4Fe-4S] cluster-binding residues include C2170, C2173, C2185, and C2187. The CysB motif motif lies at 2170 to 2187 (CSKCGGLKISDFMEHCSC).

The protein belongs to the DNA polymerase type-B family. Heterotetramer. Consists of 4 subunits: pol2, dpb2, dpb3 and dpb4. It depends on [4Fe-4S] cluster as a cofactor.

It is found in the nucleus. The catalysed reaction is DNA(n) + a 2'-deoxyribonucleoside 5'-triphosphate = DNA(n+1) + diphosphate. DNA polymerase II participates in chromosomal DNA replication. This Aspergillus fumigatus (strain ATCC MYA-4609 / CBS 101355 / FGSC A1100 / Af293) (Neosartorya fumigata) protein is DNA polymerase epsilon catalytic subunit A (pol2).